We begin with the raw amino-acid sequence, 197 residues long: Putative NADH dehydrogenase/NAD(P)H nitroreductase Lcho_1290 (197 aa).

It belongs to the nitroreductase family. HadB/RutE subfamily. The cofactor is FMN.

The sequence is that of Putative NADH dehydrogenase/NAD(P)H nitroreductase Lcho_1290 from Leptothrix cholodnii (strain ATCC 51168 / LMG 8142 / SP-6) (Leptothrix discophora (strain SP-6)).